Reading from the N-terminus, the 399-residue chain is Organelle RRM domain-containing protein 1, chloroplastic (399 aa).

The N-terminal 52 residues, 1 to 52, are a transit peptide targeting the chloroplast; sequence MDAARASLLLAGGLAVSTSTSAVATAAQTVSIPHLSPHTRRRRQRRFLRLAS. Residues 295–373 enclose the RRM domain; sequence KRLFVTGLSF…WMIVVDVAKH (79 aa). Residues 377–399 are disordered; that stretch reads DRQPPYSASGRSNQVLRSRYHTG.

The protein resides in the plastid. Its subcellular location is the chloroplast. Functionally, involved in C-to-U editing of chloroplastic RNA. Functions as major chloroplastic editing factor. Controls a majority of the chloroplastic editing sites. The protein is Organelle RRM domain-containing protein 1, chloroplastic of Oryza sativa subsp. japonica (Rice).